Reading from the N-terminus, the 127-residue chain is DNA-directed RNA polymerases I, II, and III subunit RPABC2 (127 aa).

Over residues 1–32 the composition is skewed to acidic residues; it reads MSDNEDNFDGDDFDDVEEDEGLDDLENAEEEG. Positions 1–52 are disordered; the sequence is MSDNEDNFDGDDFDDVEEDEGLDDLENAEEEGQVNVEILPSGERPQANQKRI. Serine 2 carries the post-translational modification N-acetylserine. Residue serine 2 is modified to Phosphoserine; by CK2.

The protein belongs to the archaeal Rpo6/eukaryotic RPB6 RNA polymerase subunit family. In terms of assembly, component of the RNA polymerase I (Pol I), RNA polymerase II (Pol II) and RNA polymerase III (Pol III) complexes consisting of at least 13, 12 and 17 subunits, respectively. Pol I complex consists of a ten-subunit catalytic core composed of POLR1A/RPA1, POLR1B/RPA2, POLR1C/RPAC1, POLR1D/RPAC2, POLR1H/RPA12, POLR2E/RPABC1, POLR2F/RPABC2, POLR2H/RPABC3, POLR2K/RPABC4 and POLR2L/RPABC5; a mobile stalk subunit POLR1F/RPA43 protruding from the core and additional subunits homologous to general transcription factors POLR1E/RPA49 and POLR1G/RPA34. Part of Pol I pre-initiation complex (PIC), in which Pol I core assembles with RRN3 and promoter-bound UTBF and SL1/TIF-IB complex. Pol II complex contains a ten-subunit catalytic core composed of POLR2A/RPB1, POLR2B/RPB2, POLR2C/RPB3, POLR2I/RPB9, POLR2J/RPB11, POLR2E/RPABC1, POLR2F/RPABC2, POLR2H/RPABC3, POLR2K/RPABC4 and POLR2L/RPABC5 and a mobile stalk composed of two subunits POLR2D/RPB4 and POLR2G/RPB7. Part of Pol II(G) complex, in which Pol II core associates with an additional subunit POLR2M; unlike conventional Pol II, Pol II(G) functions as a transcriptional repressor. Part of TBP-based Pol II pre-initiation complex (PIC), in which Pol II core assembles with general transcription factors and other specific initiation factors including GTF2E1, GTF2E2, GTF2F1, GTF2F2, TCEA1, ERCC2, ERCC3, GTF2H2, GTF2H3, GTF2H4, GTF2H5, GTF2A1, GTF2A2, GTF2B and TBP; this large multi-subunit PIC complex mediates DNA unwinding and targets Pol II core to the transcription start site where the first phosphodiester bond forms. Pol III complex consists of a ten-subunit catalytic core composed of POLR3A/RPC1, POLR3B/RPC2, POLR1C/RPAC1, POLR1D/RPAC2, POLR3K/RPC10, POLR2E/RPABC1, POLR2F/RPABC2, POLR2H/RPABC3, POLR2K/RPABC4 and POLR2L/RPABC5; a mobile stalk composed of two subunits POLR3H/RPC8 and CRCP/RPC9, protruding from the core and functioning primarily in transcription initiation; and additional subunits homologous to general transcription factors of the RNA polymerase II machinery, POLR3C/RPC3-POLR3F/RPC6-POLR3G/RPC7 heterotrimer required for transcription initiation and POLR3D/RPC4-POLR3E/RPC5 heterodimer involved in both transcription initiation and termination.

The protein resides in the nucleus. Its subcellular location is the nucleolus. Its function is as follows. DNA-dependent RNA polymerase catalyzes the transcription of DNA into RNA using the four ribonucleoside triphosphates as substrates. Common component of RNA polymerases I, II, and III which synthesize ribosomal RNA precursors, mRNA precursors and many functional non-coding RNAs, and small RNAs, such as 5S rRNA and tRNAs, respectively. Pol II is the central component of the basal RNA polymerase II transcription machinery. Pols are composed of mobile elements that move relative to each other. In Pol II, POLR2F/RPABC2 is part of the clamp element and together with parts of POLR2A/RPB1 and POLR2B/RPB2 forms a pocket to which the POLR2D/RPB4-POLR2G/RPB7 subcomplex binds. In Bos taurus (Bovine), this protein is DNA-directed RNA polymerases I, II, and III subunit RPABC2 (POLR2F).